A 263-amino-acid polypeptide reads, in one-letter code: L-histidine 2-aminobutanoyltransferase (263 aa).

The protein belongs to the methyltransferase superfamily. CntL family.

It carries out the reaction L-histidine + S-adenosyl-L-methionine = (2S)-2-amino-4-{[(1S)-1-carboxy-2-(1H-imidazol-4-yl)ethyl]amino}butanoate + S-methyl-5'-thioadenosine + H(+). Functionally, catalyzes the nucleophilic attack of one alpha-aminobutanoate moiety from SAM onto L-histidine to produce the intermediate (2S)-2-amino-4-{[(1S)-1-carboxy-2-(1H-imidazol-4-yl)ethyl]amino}butanoate. Functions in the biosynthesis of the metallophore pseudopaline, which is involved in the acquisition of nickel and zinc, and thus enables bacterial growth inside the host, where metal access is limited. Therefore, this enzyme probably contributes to Pseudomonas virulence. Appears to be specific for L-histidine as substrate. This chain is L-histidine 2-aminobutanoyltransferase, found in Pseudomonas aeruginosa (strain ATCC 15692 / DSM 22644 / CIP 104116 / JCM 14847 / LMG 12228 / 1C / PRS 101 / PAO1).